The chain runs to 121 residues: Small ribosomal subunit protein uS13 (121 aa).

Residues 90 to 121 (RHRRGLPTRGQNTKNNARTRKGPTKTVAGKKK) form a disordered region. Residues 106–121 (ARTRKGPTKTVAGKKK) are compositionally biased toward basic residues.

The protein belongs to the universal ribosomal protein uS13 family. Part of the 30S ribosomal subunit. Forms a loose heterodimer with protein S19. Forms two bridges to the 50S subunit in the 70S ribosome.

Its function is as follows. Located at the top of the head of the 30S subunit, it contacts several helices of the 16S rRNA. In the 70S ribosome it contacts the 23S rRNA (bridge B1a) and protein L5 of the 50S subunit (bridge B1b), connecting the 2 subunits; these bridges are implicated in subunit movement. Contacts the tRNAs in the A and P-sites. The chain is Small ribosomal subunit protein uS13 from Enterococcus faecalis (strain ATCC 700802 / V583).